The primary structure comprises 415 residues: Mitogen-activated protein kinase mpkC (415 aa).

In terms of domain architecture, Protein kinase spans 20-299 (YANLQPVGLG…AEQGLMHPWM (280 aa)). ATP contacts are provided by residues 26 to 34 (VGLGTAGVV) and Lys-49. The active-site Proton acceptor is Asp-141. Position 171 is a phosphothreonine (Thr-171). The TXY motif lies at 171-173 (TGY). Tyr-173 bears the Phosphotyrosine mark.

The protein belongs to the protein kinase superfamily. Ser/Thr protein kinase family. MAP kinase subfamily. HOG1 sub-subfamily. It depends on Mg(2+) as a cofactor. In terms of processing, dually phosphorylated on Thr-171 and Tyr-173, which activates the enzyme.

The enzyme catalyses L-seryl-[protein] + ATP = O-phospho-L-seryl-[protein] + ADP + H(+). The catalysed reaction is L-threonyl-[protein] + ATP = O-phospho-L-threonyl-[protein] + ADP + H(+). With respect to regulation, activated by tyrosine and threonine phosphorylation. Its function is as follows. Mitogen-activated protein kinase required for growth on media where sorbitol or mannitol is the sole carbon source. This is Mitogen-activated protein kinase mpkC (mpkC) from Emericella nidulans (strain FGSC A4 / ATCC 38163 / CBS 112.46 / NRRL 194 / M139) (Aspergillus nidulans).